The chain runs to 127 residues: Phosphoribosyl-AMP cyclohydrolase (127 aa).

Asp96 is a Mg(2+) binding site. Residue Cys97 participates in Zn(2+) binding. Mg(2+)-binding residues include Asp98 and Asp100. 2 residues coordinate Zn(2+): Cys113 and Cys120.

This sequence belongs to the PRA-CH family. In terms of assembly, homodimer. The cofactor is Mg(2+). Zn(2+) serves as cofactor.

Its subcellular location is the cytoplasm. It carries out the reaction 1-(5-phospho-beta-D-ribosyl)-5'-AMP + H2O = 1-(5-phospho-beta-D-ribosyl)-5-[(5-phospho-beta-D-ribosylamino)methylideneamino]imidazole-4-carboxamide. The protein operates within amino-acid biosynthesis; L-histidine biosynthesis; L-histidine from 5-phospho-alpha-D-ribose 1-diphosphate: step 3/9. Functionally, catalyzes the hydrolysis of the adenine ring of phosphoribosyl-AMP. The sequence is that of Phosphoribosyl-AMP cyclohydrolase from Corynebacterium jeikeium (strain K411).